Consider the following 386-residue polypeptide: Protein phosphatase methylesterase 1 (386 aa).

The segment at 1–38 is disordered; sequence MSALEKSMHLGRLPSRPPLPGSGGSQSGAKMRMGPGRK. Phosphoserine is present on Ser-15. The residue at position 16 (Arg-16) is an Asymmetric dimethylarginine; alternate. At Arg-16 the chain carries Omega-N-methylarginine; alternate. Residue Ser-156 is part of the active site. The span at 255-265 shows a compositional bias: acidic residues; it reads IEEEEEDEEGS. Residues 255-280 are disordered; the sequence is IEEEEEDEEGSESVNKRKKEDDMETK. Over residues 268–280 the composition is skewed to basic and acidic residues; it reads VNKRKKEDDMETK. Residue His-349 is part of the active site.

This sequence belongs to the AB hydrolase superfamily. Binds PPP2CA and PPP2CB. Phosphorylated by SIK1 following increases in intracellular sodium, leading to dissociation from the protein phosphatase 2A (PP2A) complex and subsequent dephosphorylation of sodium/potassium-transporting ATPase ATP1A1.

It carries out the reaction [phosphatase 2A protein]-C-terminal L-leucine methyl ester + H2O = [phosphatase 2A protein]-C-terminal L-leucine + methanol + H(+). Demethylates proteins that have been reversibly carboxymethylated. Demethylates PPP2CB (in vitro) and PPP2CA. Binding to PPP2CA displaces the manganese ion and inactivates the enzyme. In Rattus norvegicus (Rat), this protein is Protein phosphatase methylesterase 1 (Ppme1).